The following is a 340-amino-acid chain: N-acetyl-gamma-glutamyl-phosphate reductase (340 aa).

The active site involves cysteine 148.

This sequence belongs to the NAGSA dehydrogenase family. Type 1 subfamily.

It is found in the cytoplasm. The catalysed reaction is N-acetyl-L-glutamate 5-semialdehyde + phosphate + NADP(+) = N-acetyl-L-glutamyl 5-phosphate + NADPH + H(+). The protein operates within amino-acid biosynthesis; L-arginine biosynthesis; N(2)-acetyl-L-ornithine from L-glutamate: step 3/4. Functionally, catalyzes the NADPH-dependent reduction of N-acetyl-5-glutamyl phosphate to yield N-acetyl-L-glutamate 5-semialdehyde. This chain is N-acetyl-gamma-glutamyl-phosphate reductase, found in Methanosarcina mazei (strain ATCC BAA-159 / DSM 3647 / Goe1 / Go1 / JCM 11833 / OCM 88) (Methanosarcina frisia).